We begin with the raw amino-acid sequence, 258 residues long: Imidazole glycerol phosphate synthase subunit HisF (258 aa).

Residues D11 and D130 contribute to the active site.

Belongs to the HisA/HisF family. Heterodimer of HisH and HisF.

Its subcellular location is the cytoplasm. It carries out the reaction 5-[(5-phospho-1-deoxy-D-ribulos-1-ylimino)methylamino]-1-(5-phospho-beta-D-ribosyl)imidazole-4-carboxamide + L-glutamine = D-erythro-1-(imidazol-4-yl)glycerol 3-phosphate + 5-amino-1-(5-phospho-beta-D-ribosyl)imidazole-4-carboxamide + L-glutamate + H(+). It participates in amino-acid biosynthesis; L-histidine biosynthesis; L-histidine from 5-phospho-alpha-D-ribose 1-diphosphate: step 5/9. Its function is as follows. IGPS catalyzes the conversion of PRFAR and glutamine to IGP, AICAR and glutamate. The HisF subunit catalyzes the cyclization activity that produces IGP and AICAR from PRFAR using the ammonia provided by the HisH subunit. The chain is Imidazole glycerol phosphate synthase subunit HisF from Klebsiella pneumoniae (strain 342).